We begin with the raw amino-acid sequence, 256 residues long: Probable aquaporin TIP5-1 (256 aa).

At methionine 1 the chain carries N-acetylmethionine. 5 helical membrane-spanning segments follow: residues 24-44, 57-77, 89-109, 144-164, and 171-191; these read CYVSEFISTFFFVLAAVGSVM, PFGVLIPAIANALALSSSVYI, AVTFAMAVAGRISVPTAMFYW, FGASVLEGVLAFVLVYTVFTA, and LPLAVGPIFIGFVAGANVLAA. The NPA 1 signature appears at 87-89; it reads NPA. An NPA 2 motif is present at residues 200-202; the sequence is NPA. The chain crosses the membrane as a helical span at residues 222 to 242; sequence VGPLLGGATAALVYDNVVVPV. Position 249 is a phosphoserine (serine 249).

This sequence belongs to the MIP/aquaporin (TC 1.A.8) family. TIP (TC 1.A.8.10) subfamily.

The protein resides in the membrane. In terms of biological role, potential aquaporin, which may facilitate the transport of water and small neutral solutes across cell membranes. The protein is Probable aquaporin TIP5-1 (TIP5-1) of Arabidopsis thaliana (Mouse-ear cress).